A 950-amino-acid polypeptide reads, in one-letter code: Oxysterol-binding protein-related protein 1 (950 aa).

The segment at 1-237 is interaction with RAB7A; sequence MNTEAEQQLL…NKVVHKALKR (237 aa). ANK repeat units follow at residues 47 to 76, 80 to 109, and 175 to 204; these read LGWTPLHLACYFGHKQVVQDLLKAGAKVNM, MGDTPLHRAAFTGRKELVMLLLEYNADTTV, and LGNTPLHCAAYRAHKQCVLKLLRSGADPSL. A PH domain is found at 235–334; it reads LKRFEGPLWK…WLEAIEEHSA (100 aa). Residues 430–463 are a coiled coil; it reads NFKLEQEQEKNKILSEALETLATEHHELERSLVE. The FFAT signature appears at 469 to 483; that stretch reads SILSEDEFYDALSGS. Disordered regions lie at residues 795-821 and 881-913; these read KKNTEEKKTSKQASTSEESDEMPVPDS and MENGEIDQASEEKKRLEEKQRAARKNRSKSEED. Residues 877–913 adopt a coiled-coil conformation; it reads DIRAMENGEIDQASEEKKRLEEKQRAARKNRSKSEED. The span at 890-901 shows a compositional bias: basic and acidic residues; sequence SEEKKRLEEKQR.

The protein belongs to the OSBP family. Interacts (via FFAT motif) with VAPA. Interacts (via FFAT motif) with VAPB. Interacts with the GTP-bound form of RAB7A. Interacts with OAS1B. Interacts (via FFAT motif) with MOSPD2 (via MSP domain). Detected in prostate and liver.

The protein localises to the late endosome. In terms of biological role, binds phospholipids; exhibits strong binding to phosphatidic acid and weak binding to phosphatidylinositol 3-phosphate. Stabilizes GTP-bound RAB7A on late endosomes/lysosomes and alters functional properties of late endocytic compartments via its interaction with RAB7A. Binds 25-hydroxycholesterol and cholesterol. In Rattus norvegicus (Rat), this protein is Oxysterol-binding protein-related protein 1.